A 510-amino-acid polypeptide reads, in one-letter code: NAD(P)H-quinone oxidoreductase subunit 2 B, chloroplastic (510 aa).

13 consecutive transmembrane segments (helical) span residues 24–44 (LLLF…GLIL), 57–77 (IPWF…ALLF), 99–119 (IFQF…VEYI), 124–144 (MAIT…MFLC), 149–169 (LITI…LSGY), 183–203 (YLLM…WLYG), 227–247 (PGIL…LSLA), 295–315 (WHLL…LIAI), 323–343 (MLAY…IVGD), 354–374 (YMLF…LFGL), 395–415 (ALSL…AGFF), 428–448 (GLYF…YYYL), and 484–504 (MIVC…IIAI).

It belongs to the complex I subunit 2 family. In terms of assembly, NDH is composed of at least 16 different subunits, 5 of which are encoded in the nucleus.

It localises to the plastid. The protein resides in the chloroplast thylakoid membrane. The catalysed reaction is a plastoquinone + NADH + (n+1) H(+)(in) = a plastoquinol + NAD(+) + n H(+)(out). It carries out the reaction a plastoquinone + NADPH + (n+1) H(+)(in) = a plastoquinol + NADP(+) + n H(+)(out). NDH shuttles electrons from NAD(P)H:plastoquinone, via FMN and iron-sulfur (Fe-S) centers, to quinones in the photosynthetic chain and possibly in a chloroplast respiratory chain. The immediate electron acceptor for the enzyme in this species is believed to be plastoquinone. Couples the redox reaction to proton translocation, and thus conserves the redox energy in a proton gradient. The chain is NAD(P)H-quinone oxidoreductase subunit 2 B, chloroplastic from Eucalyptus globulus subsp. globulus (Tasmanian blue gum).